The primary structure comprises 364 residues: B3 domain-containing protein At5g38490 (364 aa).

A disordered region spans residues 148–202 (ASTSSSSLLNLPCLEPSTETKDVPNPNYQSSSPSSCLTGKTNRKRRAVEQRKSGK). The segment at residues 260–364 (FQKLIRNDFL…GVLCFALDTE (105 aa)) is a DNA-binding region (TF-B3).

Its subcellular location is the nucleus. This chain is B3 domain-containing protein At5g38490, found in Arabidopsis thaliana (Mouse-ear cress).